A 403-amino-acid chain; its full sequence is S-adenosylmethionine sensor upstream of mTORC1 (403 aa).

Over residues 1–10 (MEPGPGGRGA) the composition is skewed to gly residues. Residues 1–32 (MEPGPGGRGAARGQRPPNAAQPREQERKLEQE) are disordered. Low complexity predominate over residues 11-22 (ARGQRPPNAAQP). Basic and acidic residues predominate over residues 23–32 (REQERKLEQE). Positions 93, 170, 188, 200, 201, and 242 each coordinate S-adenosyl-L-methionine.

This sequence belongs to the BMT2/SAMTOR family. Interacts with the GATOR1 complex; interaction is disrupted when SAMTOR binds S-adenosyl-L-methionine. Interacts with the KICSTOR complex; interaction is disrupted when SAMTOR binds S-adenosyl-L-methionine.

In terms of biological role, S-adenosyl-L-methionine-binding protein that acts as an inhibitor of mTORC1 signaling via interaction with the GATOR1 and KICSTOR complexes. Acts as a sensor of S-adenosyl-L-methionine to signal methionine sufficiency to mTORC1: in presence of methionine, binds S-adenosyl-L-methionine, leading to disrupt interaction with the GATOR1 and KICSTOR complexes and promote mTORC1 signaling. Upon methionine starvation, S-adenosyl-L-methionine levels are reduced, thereby promoting the association with GATOR1 and KICSTOR, leading to inhibit mTORC1 signaling. Probably also acts as a S-adenosyl-L-methionine-dependent methyltransferase. The chain is S-adenosylmethionine sensor upstream of mTORC1 from Mus musculus (Mouse).